The following is a 303-amino-acid chain: Ribosomal protein L11 methyltransferase (303 aa).

Positions 152, 173, 195, and 239 each coordinate S-adenosyl-L-methionine.

This sequence belongs to the methyltransferase superfamily. PrmA family.

The protein localises to the cytoplasm. It catalyses the reaction L-lysyl-[protein] + 3 S-adenosyl-L-methionine = N(6),N(6),N(6)-trimethyl-L-lysyl-[protein] + 3 S-adenosyl-L-homocysteine + 3 H(+). In terms of biological role, methylates ribosomal protein L11. The polypeptide is Ribosomal protein L11 methyltransferase (Desulforapulum autotrophicum (strain ATCC 43914 / DSM 3382 / VKM B-1955 / HRM2) (Desulfobacterium autotrophicum)).